A 400-amino-acid chain; its full sequence is MAKAKFERNKPHVNIGTIGHVDHGKTSLTAAITKVLGFLGSAEYKAYDQIDAAPEERERGITINTSHVEYQTETRHYAHVDCPGHADYVKNMITGAAQMDGAILVVSAADGPMPQTREHILLSHQVGVPYIIVFLNKCDMVDDDELIELVEMEVRELLSSYEFPGDDTPIIRGSALVALESTSTDINSPEYAPIVALMKEVDNYIPTPERATDKAFIMPVEDVFSITGRGTVATGRVEKGIVKVGDEVEIVGLMEAPKKTVVTGVEMFRKLLDQAEAGDNIGALLRGVQRTDIERGQVLAKPGSIKPHTYFEGQVYVLTSAEGGRHKPFFNGYRPQFYFRTTDVTGVIEIPEGTEMVMPGDHITMKIKLITPIAMEEGLKFAIREGGRTVGAGNVSKIIE.

The region spanning 10–209 is the tr-type G domain; sequence KPHVNIGTIG…EVDNYIPTPE (200 aa). Residues 19–26 are G1; sequence GHVDHGKT. A GTP-binding site is contributed by 19 to 26; the sequence is GHVDHGKT. Mg(2+) is bound at residue Thr-26. Positions 60–64 are G2; that stretch reads GITIN. Residues 81 to 84 are G3; it reads DCPG. Residues 81–85 and 136–139 each bind GTP; these read DCPGH and NKCD. The interval 136–139 is G4; sequence NKCD. Positions 174–176 are G5; that stretch reads SAL.

This sequence belongs to the TRAFAC class translation factor GTPase superfamily. Classic translation factor GTPase family. EF-Tu/EF-1A subfamily. As to quaternary structure, monomer.

The protein resides in the cytoplasm. It carries out the reaction GTP + H2O = GDP + phosphate + H(+). In terms of biological role, GTP hydrolase that promotes the GTP-dependent binding of aminoacyl-tRNA to the A-site of ribosomes during protein biosynthesis. The chain is Elongation factor Tu from Ruminiclostridium cellulolyticum (strain ATCC 35319 / DSM 5812 / JCM 6584 / H10) (Clostridium cellulolyticum).